A 500-amino-acid chain; its full sequence is Cytochrome P450 monooxygenase acrD (500 aa).

A helical membrane pass occupies residues 13 to 32 (PYLSGTNLVWTLLLVGYIIP). N-linked (GlcNAc...) asparagine glycans are attached at residues Asn210 and Asn414. A heme-binding site is contributed by Cys447.

The protein belongs to the cytochrome P450 family. It depends on heme as a cofactor.

It localises to the membrane. It participates in secondary metabolite biosynthesis. Cytochrome P450 monooxygenase; part of the cluster that mediates the biosynthesis of acurin A, a highly reduced polyketide coupled to a serine via a peptide bond. The activities of the highly reducing polyketide synthase acrA and the nonribosomal peptide synthetase acrB are collectively responsible for the synthesis of the acurin A core structure with a heptaketide backbone produced by acrA covalently fused to a L-serine by acrB. After the formation of the PK-NRP hybrid product, it is detached from acrB by reductive release to set up the formation of the lactam ring by aldol condensation. The hydrolyase acrC then catalyzes water loss to generate a double bond in the ring. This double bond is probably reduced, which is followed by three oxidations at C-22 to generate the carboxylic acid moiety, involving probably the FAD-binding monooxygenase acrE and the cytochrome P450 monooxygenases acrD and acrF. Finally, a last methylation step performed by the O-methyltransferase acrG leads to the production of acurin A. The chain is Cytochrome P450 monooxygenase acrD from Aspergillus aculeatus (strain ATCC 16872 / CBS 172.66 / WB 5094).